An 85-amino-acid chain; its full sequence is WAP four-disulfide core domain protein 12 (85 aa).

The signal sequence occupies residues 1–21 (MWPNSILVLMTLLISSTLVTG). The region spanning 25–72 (KGEEKRVCPPDYVRCIRQDDPQCYSDNDCGDQEICCFWQCGFKCVLPV) is the WAP domain. Disulfide bonds link Cys-32–Cys-60, Cys-39–Cys-64, Cys-47–Cys-59, and Cys-53–Cys-68.

Constitutively expressed in tongue.

Its subcellular location is the secreted. In terms of biological role, antibacterial protein which inhibits the growth of E.coli and S.aureus. Putative acid-stable proteinase inhibitor. This chain is WAP four-disulfide core domain protein 12, found in Mus musculus (Mouse).